A 320-amino-acid polypeptide reads, in one-letter code: Aminoacyl tRNA synthase complex-interacting multifunctional protein 2 (320 aa).

Residues 31-51 (HSKTTSPATDAGHVQEPSEPS) form a disordered region. Residue S36 is modified to Phosphoserine. The interaction with PRKN stretch occupies residues 82–162 (TPDADLDVTN…HTHSSVKNVP (81 aa)). An interaction with TP53 region spans residues 162 to 225 (PENLLKCFGE…FLFSLFGQKH (64 aa)). Positions 220 to 317 (LFGQKHNAVH…NLAPFSTALQ (98 aa)) constitute a GST C-terminal domain.

As to quaternary structure, part of the multisynthetase complex (MSC), a multisubunit complex that groups tRNA ligases for Arg (RARS1), Asp (DARS1), Gln (QARS1), Ile (IARS1), Leu (LARS1), Lys (KARS1), Met (MARS1) the bifunctional ligase for Glu and Pro (EPRS1) and the auxiliary subunits AIMP1/p43, AIMP2/p38 and EEF1E1/p18. Interacts (via N-terminus) with KARS1. Interacts with EPRS1. Forms a linear complex that contains MARS1, EEF1E1, EPRS1 and AIMP2 that is at the core of the multisubunit complex. Binds FUBP1 (via C-terminus). Interacts in both its unphosphorylated and phosphorylated forms with p53/TP53 (via N-terminus) in the nucleus following UV irradiation. Interacts (via N-terminus) with PRKN/parkin (via first RING-type domain). Interacts with TARS3. Phosphorylated on serine residues in response to UV irradiation. In terms of processing, ubiquitinated by PRKN, leading to its degradation by the proteasome.

It localises to the cytoplasm. It is found in the cytosol. The protein resides in the nucleus. Its function is as follows. Required for assembly and stability of the aminoacyl-tRNA synthase complex. Mediates ubiquitination and degradation of FUBP1, a transcriptional activator of MYC, leading to MYC down-regulation which is required for aveolar type II cell differentiation. Blocks MDM2-mediated ubiquitination and degradation of p53/TP53. Functions as a proapoptotic factor. This Rattus norvegicus (Rat) protein is Aminoacyl tRNA synthase complex-interacting multifunctional protein 2 (Aimp2).